Reading from the N-terminus, the 256-residue chain is 5-keto-4-deoxy-D-glucarate aldolase (256 aa).

Histidine 50 (proton acceptor) is an active-site residue. A substrate-binding site is contributed by glutamine 151. Mg(2+) is bound at residue glutamate 153. Residues serine 178 and aspartate 179 each coordinate substrate. Aspartate 179 provides a ligand contact to Mg(2+).

Belongs to the HpcH/HpaI aldolase family. KDGluc aldolase subfamily. Homohexamer; trimer of dimers. The cofactor is Mg(2+).

It carries out the reaction 5-dehydro-4-deoxy-D-glucarate = 2-hydroxy-3-oxopropanoate + pyruvate. It catalyses the reaction 2-dehydro-3-deoxy-D-glucarate = 2-hydroxy-3-oxopropanoate + pyruvate. It participates in carbohydrate acid metabolism; galactarate degradation; D-glycerate from galactarate: step 2/3. Catalyzes the reversible retro-aldol cleavage of both 5-keto-4-deoxy-D-glucarate and 2-keto-3-deoxy-D-glucarate to pyruvate and tartronic semialdehyde. The protein is 5-keto-4-deoxy-D-glucarate aldolase of Salmonella gallinarum (strain 287/91 / NCTC 13346).